The primary structure comprises 796 residues: Pleckstrin homology domain-containing family H member 3 (796 aa).

The signal sequence occupies residues methionine 1–threonine 18. The interval glutamate 28 to serine 71 is disordered. The segment covering leucine 29–threonine 41 has biased composition (acidic residues). The residue at position 30 (serine 30) is a Phosphoserine. The span at valine 59–glycine 68 shows a compositional bias: polar residues. Residues aspartate 95 to alanine 199 form the PH domain. Positions histidine 237–serine 399 constitute a MyTH4 domain. In terms of domain architecture, FERM spans leucine 404–arginine 757. Asparagine 474 is a glycosylation site (N-linked (GlcNAc...) asparagine). Disordered stretches follow at residues proline 557 to alanine 584 and lysine 598 to serine 625. The span at leucine 563–serine 583 shows a compositional bias: pro residues. Over residues lysine 598–glycine 608 the composition is skewed to basic residues. Arginine 638 carries the post-translational modification Omega-N-methylarginine. A disordered region spans residues proline 750–aspartate 796. A compositionally biased stretch (low complexity) spans arginine 757–serine 766. The span at proline 774–aspartate 796 shows a compositional bias: polar residues.

The sequence is that of Pleckstrin homology domain-containing family H member 3 (Plekhh3) from Mus musculus (Mouse).